The following is a 293-amino-acid chain: MEITFQKVEHRYQYKTPFERRALYDVDVSFPSGGYYAIIGHTGSGKSTMIQHLNGLLQPTNGTVQIGERFISAGKKEKKLKPLRKKVGVVFQFPEHQLFEETVEKDICFGPTNFGVSEEAAKQKAREAIELVGLEPELLARSPFELSGGQMRRVAIAGVLAMEPEVLVLDEPTAGLDPKGQNELMEMFYKLHKEKGLTVILVTHNMEDAAKYAEQIVVMHKGTVFLQGSAEEVFSHADELEKIGVDLPMSLKYKRAIEEKFGISIPKATLSLEDLTHEVVQVLRKGGHESCSS.

The region spanning 3-246 (ITFQKVEHRY…ADELEKIGVD (244 aa)) is the ABC transporter domain. 40 to 47 (GHTGSGKS) is an ATP binding site.

Belongs to the ABC transporter superfamily. Energy-coupling factor EcfA family. In terms of assembly, forms a stable energy-coupling factor (ECF) transporter complex composed of 2 membrane-embedded substrate-binding proteins (S component), 2 ATP-binding proteins (A component) and 2 transmembrane proteins (T component).

It is found in the cell membrane. Its function is as follows. ATP-binding (A) component of a common energy-coupling factor (ECF) ABC-transporter complex. Unlike classic ABC transporters this ECF transporter provides the energy necessary to transport a number of different substrates. The polypeptide is Energy-coupling factor transporter ATP-binding protein EcfA2 (Bacillus thuringiensis (strain Al Hakam)).